A 140-amino-acid chain; its full sequence is Ribosomal RNA large subunit methyltransferase H (140 aa).

Positions 55 and 87 each coordinate S-adenosyl-L-methionine.

Belongs to the RNA methyltransferase RlmH family. Homodimer.

Its subcellular location is the cytoplasm. It carries out the reaction pseudouridine(1915) in 23S rRNA + S-adenosyl-L-methionine = N(3)-methylpseudouridine(1915) in 23S rRNA + S-adenosyl-L-homocysteine + H(+). Functionally, specifically methylates the pseudouridine at position 1915 (m3Psi1915) in 23S rRNA. In Rhizorhabdus wittichii (strain DSM 6014 / CCUG 31198 / JCM 15750 / NBRC 105917 / EY 4224 / RW1) (Sphingomonas wittichii), this protein is Ribosomal RNA large subunit methyltransferase H.